We begin with the raw amino-acid sequence, 71 residues long: Peptide Ctri10261 (71 aa).

The first 23 residues, 1-23, serve as a signal peptide directing secretion; it reads MKIPLILVTIAIILLMVPTESDA. Phenylalanine amide is present on phenylalanine 37. Positions 41-71 are excised as a propeptide; sequence SLKNRDYFDYMQDPSLSNADLRELEELLEDY.

The protein belongs to the non-disulfide-bridged peptide (NDBP) superfamily. Short antimicrobial peptide (group 4) family. In terms of tissue distribution, expressed by the venom gland.

It localises to the secreted. Antimicrobial peptide. The protein is Peptide Ctri10261 of Chaerilus tricostatus (Scorpion).